We begin with the raw amino-acid sequence, 53 residues long: Sec-independent protein translocase protein TatA (53 aa).

A helical membrane pass occupies residues 1–21 (MGMSFSHLLIVLLIIFVLFGA).

It belongs to the TatA/E family. In terms of assembly, the Tat system comprises two distinct complexes: a TatABC complex, containing multiple copies of TatA, TatB and TatC subunits, and a separate TatA complex, containing only TatA subunits. Substrates initially bind to the TatABC complex, which probably triggers association of the separate TatA complex to form the active translocon.

It localises to the cell inner membrane. Part of the twin-arginine translocation (Tat) system that transports large folded proteins containing a characteristic twin-arginine motif in their signal peptide across membranes. TatA could form the protein-conducting channel of the Tat system. This is Sec-independent protein translocase protein TatA from Rickettsia rickettsii (strain Iowa).